The following is a 1596-amino-acid chain: Cellulose synthase 2 (1596 aa).

The segment at 1–749 (MIYRAILKRL…RSARHGATAS (749 aa)) is catalytic. 2 consecutive transmembrane segments (helical) span residues 25–45 (SPFV…GVTI) and 106–126 (LSLL…LSYF). A catalytic subdomain A region spans residues 145–238 (DWPVVDVYVP…YVVIFDCDHI (94 aa)). Residue Asp-187 is part of the active site. Positions 234 and 236 each coordinate substrate. The catalytic subdomain B stretch occupies residues 315-375 (SAVLGIGGFA…GQRVRWARGM (61 aa)). Asp-331 is a catalytic residue. Transmembrane regions (helical) follow at residues 396-416 (LCYL…VFLA), 421-441 (FLFL…VYAF), 505-525 (FDLN…LALV), and 544-564 (FALN…SIAV). The PilZ domain occupies 570 to 669 (QIRHKPRVRA…ERQIVEFMFG (100 aa)). The tract at residues 750-1596 (LIVLLGLPAA…RVKDTTDASH (847 aa)) is cyclic di-GMP binding domain. Disordered regions lie at residues 769-812 (SRAT…IAPA) and 828-868 (TGPA…APPI). Pro residues predominate over residues 783 to 809 (VEPPPVNAPPPPSLPQPPGTLPTPPQI). Residues 1553-1573 (LTLYVLGLVGAGLVAAAAVRL) form a helical membrane-spanning segment.

This sequence in the N-terminal section; belongs to the glycosyltransferase 2 family. The protein in the C-terminal section; belongs to the AcsB/BcsB family.

Its subcellular location is the cell inner membrane. The enzyme catalyses [(1-&gt;4)-beta-D-glucosyl](n) + UDP-alpha-D-glucose = [(1-&gt;4)-beta-D-glucosyl](n+1) + UDP + H(+). In Novacetimonas hansenii (Komagataeibacter hansenii), this protein is Cellulose synthase 2 (acsAII).